A 354-amino-acid chain; its full sequence is Probable L-ascorbate-6-phosphate lactonase UlaG (354 aa).

This sequence belongs to the UlaG family. A divalent metal cation is required as a cofactor.

It is found in the cytoplasm. It carries out the reaction L-ascorbate 6-phosphate + H2O = 3-dehydro-L-gulonate 6-phosphate. The protein operates within cofactor degradation; L-ascorbate degradation; D-xylulose 5-phosphate from L-ascorbate: step 1/4. In terms of biological role, probably catalyzes the hydrolysis of L-ascorbate-6-P into 3-keto-L-gulonate-6-P. Is essential for L-ascorbate utilization under anaerobic conditions. This Escherichia coli O139:H28 (strain E24377A / ETEC) protein is Probable L-ascorbate-6-phosphate lactonase UlaG.